A 1176-amino-acid chain; its full sequence is Carbamoyl phosphate synthase arginine-specific large chain (1176 aa).

The transit peptide at 1-11 (MLRSISIASRA) directs the protein to the mitochondrion. A carboxyphosphate synthetic domain region spans residues 70 to 465 (SRSPDVKKVL…SLQKAIRQVD (396 aa)). 12 residues coordinate ATP: arginine 197, arginine 237, glycine 243, glycine 244, lysine 273, leucine 275, glutamate 280, glycine 306, threonine 307, histidine 308, glutamine 348, and glutamate 362. In terms of domain architecture, ATP-grasp 1 spans 201-391 (VQALNEIDIP…LAYTAAKIAL (191 aa)). Mg(2+)-binding residues include glutamine 348, glutamate 362, and asparagine 364. Positions 348, 362, and 364 each coordinate Mn(2+). Residues 466 to 610 (PNFAGFEAYW…YTSYNATTHD (145 aa)) are oligomerization domain. Residues 611 to 997 (VKFDNGTMVL…AYWAALLSVN (387 aa)) are carbamoyl phosphate synthetic domain. Residues 734–931 (SSILDSIGVD…FIDTASAAIM (198 aa)) enclose the ATP-grasp 2 domain. Residues arginine 770, glutamine 809, isoleucine 811, glutamate 816, glycine 841, valine 842, histidine 843, serine 844, glutamine 884, and glutamate 902 each coordinate ATP. Mg(2+) is bound by residues glutamine 884, glutamate 902, and asparagine 904. The Mn(2+) site is built by glutamine 884, glutamate 902, and asparagine 904. Residues 998–1137 (GMKLPKANSG…NPIPYSEGFK (140 aa)) are allosteric domain. Residues 999–1154 (MKLPKANSGI…RDFVGEAATT (156 aa)) form the MGS-like domain.

It belongs to the CarB family. Heterodimer composed of 2 chains; the small (or glutamine) chain promotes the hydrolysis of glutamine to ammonia, which is used by the large (or ammonia) chain to synthesize carbamoyl phosphate. Mg(2+) is required as a cofactor. Mn(2+) serves as cofactor.

Its subcellular location is the mitochondrion. The catalysed reaction is hydrogencarbonate + L-glutamine + 2 ATP + H2O = carbamoyl phosphate + L-glutamate + 2 ADP + phosphate + 2 H(+). It carries out the reaction hydrogencarbonate + NH4(+) + 2 ATP = carbamoyl phosphate + 2 ADP + phosphate + 2 H(+). It participates in amino-acid biosynthesis; L-arginine biosynthesis; carbamoyl phosphate from bicarbonate: step 1/1. Its function is as follows. Large subunit of the arginine-specific carbamoyl phosphate synthase (CPSase). CPSase catalyzes the formation of carbamoyl phosphate from the ammonia moiety of glutamine, hydrogencarbonate, and phosphate donated by ATP, constituting the first step of 2 biosynthetic pathways, one leading to arginine and/or urea and the other to pyrimidine nucleotides. The large subunit (synthetase) binds the substrates ammonia (free or transferred from glutamine from the small subunit), hydrogencarbonate and ATP and carries out an ATP-coupled ligase reaction, activating hydrogencarbonate by forming carboxy phosphate which reacts with ammonia to form carbamoyl phosphate. The chain is Carbamoyl phosphate synthase arginine-specific large chain (argA) from Cutaneotrichosporon cutaneum (Yeast).